The sequence spans 417 residues: NADH-quinone oxidoreductase subunit D (417 aa).

The protein belongs to the complex I 49 kDa subunit family. NDH-1 is composed of 14 different subunits. Subunits NuoB, C, D, E, F, and G constitute the peripheral sector of the complex.

Its subcellular location is the cell inner membrane. It catalyses the reaction a quinone + NADH + 5 H(+)(in) = a quinol + NAD(+) + 4 H(+)(out). Its function is as follows. NDH-1 shuttles electrons from NADH, via FMN and iron-sulfur (Fe-S) centers, to quinones in the respiratory chain. The immediate electron acceptor for the enzyme in this species is believed to be ubiquinone. Couples the redox reaction to proton translocation (for every two electrons transferred, four hydrogen ions are translocated across the cytoplasmic membrane), and thus conserves the redox energy in a proton gradient. The sequence is that of NADH-quinone oxidoreductase subunit D from Burkholderia mallei (strain NCTC 10247).